Here is a 458-residue protein sequence, read N- to C-terminus: Argininosuccinate lyase (458 aa).

This sequence belongs to the lyase 1 family. Argininosuccinate lyase subfamily.

The protein resides in the cytoplasm. The enzyme catalyses 2-(N(omega)-L-arginino)succinate = fumarate + L-arginine. Its pathway is amino-acid biosynthesis; L-arginine biosynthesis; L-arginine from L-ornithine and carbamoyl phosphate: step 3/3. This is Argininosuccinate lyase from Neisseria meningitidis serogroup A / serotype 4A (strain DSM 15465 / Z2491).